The chain runs to 360 residues: Peptide chain release factor 1 (360 aa).

Q235 carries the post-translational modification N5-methylglutamine. The disordered stretch occupies residues 284-313 (AKRQQAEASTRRNLLGSGDRSDRNRTYNFP).

This sequence belongs to the prokaryotic/mitochondrial release factor family. Methylated by PrmC. Methylation increases the termination efficiency of RF1.

The protein resides in the cytoplasm. Peptide chain release factor 1 directs the termination of translation in response to the peptide chain termination codons UAG and UAA. The polypeptide is Peptide chain release factor 1 (Escherichia coli (strain UTI89 / UPEC)).